The primary structure comprises 436 residues: UPF0597 protein YhaM (436 aa).

It belongs to the UPF0597 family.

The protein is UPF0597 protein YhaM of Escherichia coli (strain K12 / MC4100 / BW2952).